The sequence spans 709 residues: Elongation factor G (709 aa).

In terms of domain architecture, tr-type G spans 9–292 (AYYRNIGISA…AVVEYLPSPT (284 aa)). Residues 18–25 (AHIDAGKT), 89–93 (DTPGH), and 143–146 (NKMD) each bind GTP.

The protein belongs to the TRAFAC class translation factor GTPase superfamily. Classic translation factor GTPase family. EF-G/EF-2 subfamily.

The protein localises to the cytoplasm. In terms of biological role, catalyzes the GTP-dependent ribosomal translocation step during translation elongation. During this step, the ribosome changes from the pre-translocational (PRE) to the post-translocational (POST) state as the newly formed A-site-bound peptidyl-tRNA and P-site-bound deacylated tRNA move to the P and E sites, respectively. Catalyzes the coordinated movement of the two tRNA molecules, the mRNA and conformational changes in the ribosome. This chain is Elongation factor G, found in Blochmanniella floridana.